Consider the following 99-residue polypeptide: Protein translation factor SUI1 homolog (99 aa).

It belongs to the SUI1 family.

This is Protein translation factor SUI1 homolog from Pyrococcus horikoshii (strain ATCC 700860 / DSM 12428 / JCM 9974 / NBRC 100139 / OT-3).